The chain runs to 397 residues: Lipid-A-disaccharide synthase (397 aa).

It belongs to the LpxB family.

It carries out the reaction a lipid X + a UDP-2-N,3-O-bis[(3R)-3-hydroxyacyl]-alpha-D-glucosamine = a lipid A disaccharide + UDP + H(+). The protein operates within bacterial outer membrane biogenesis; LPS lipid A biosynthesis. Condensation of UDP-2,3-diacylglucosamine and 2,3-diacylglucosamine-1-phosphate to form lipid A disaccharide, a precursor of lipid A, a phosphorylated glycolipid that anchors the lipopolysaccharide to the outer membrane of the cell. This chain is Lipid-A-disaccharide synthase, found in Mannheimia succiniciproducens (strain KCTC 0769BP / MBEL55E).